Reading from the N-terminus, the 193-residue chain is dCTP deaminase (193 aa).

DCTP contacts are provided by residues 110–115, Asp128, 136–138, Tyr171, Lys178, and Gln182; these read RSSLAR and VLE. The Proton donor/acceptor role is filled by Glu138. The interval 174-193 is disordered; sequence RKSAKYKDQQEAVASRISQD.

The protein belongs to the dCTP deaminase family. Homotrimer.

The enzyme catalyses dCTP + H2O + H(+) = dUTP + NH4(+). It functions in the pathway pyrimidine metabolism; dUMP biosynthesis; dUMP from dCTP (dUTP route): step 1/2. Catalyzes the deamination of dCTP to dUTP. In Shewanella baltica (strain OS223), this protein is dCTP deaminase.